The primary structure comprises 2587 residues: Fap1 adhesin (2587 aa).

The first 85 residues, 1 to 85, serve as a signal peptide directing secretion; that stretch reads MGKYKRAGET…ATVVSGNVFA (85 aa). 4 disordered regions span residues 107 to 158, 173 to 212, 515 to 539, and 568 to 2558; these read SSEN…SESV, SISESVSESTSTSIVLSESGAASGNKATSKGTEEKQDSVR, DSIPSDTTSQSESTSKSESTSKSIS, and ESIT…GENV. Positions 107-195 are ser-rich region 1, SRR1; it reads SSENFDSEKA…IVLSESGAAS (89 aa). Composition is skewed to low complexity over residues 121-158 and 173-191; these read SLSQSESASESVSESISESVSESVSTSESVSESVSESV and SISESVSESTSTSIVLSES. Residues 191–522 are sufficient to block adherence to beads; sequence SGAASGNKAT…NADSIPSDTT (332 aa). The segment covering 192-202 has biased composition (polar residues); it reads GAASGNKATSK. Residues 203-212 show a composition bias toward basic and acidic residues; that stretch reads GTEEKQDSVR. The segment at 516–2561 is ser-rich region 2, SRR2; the sequence is SIPSDTTSQS…PNTGENVSSS (2046 aa). Composition is skewed to low complexity over residues 519 to 539 and 568 to 2545; these read SDTTSQSESTSKSESTSKSIS and ESIT…VSES. A required for localization to cell wall, fimbriae formation and adherence to saliva-coated hydroxyapatite beads (SHA) but not secretion region spans residues 2367 to 2587; that stretch reads SESISESVSE…RKKRKSEDAE (221 aa). An LPXTG sorting signal motif is present at residues 2551-2555; the sequence is LPNTG. At Thr2554 the chain carries Pentaglycyl murein peptidoglycan amidated threonine. A propeptide spans 2555–2587 (removed by sortase); sequence GENVSSSLGLVGLSGLLFGALLGRKKRKSEDAE.

It belongs to the serine-rich repeat protein (SRRP) family. Post-translationally, glycosylated; occurs within the cytoplasm. It is probable that most of the Ser residues in SSR1 and SSR2 are O-GlcNAcylated. Sequential glycosylation by sugar transferases are able to generate complex sugar polymorphisms.

The protein localises to the cytoplasm. It localises to the secreted. It is found in the cell wall. The protein resides in the fimbrium. Its function is as follows. The major structural element of fimbriae. Required for adherence to saliva-coated hydroxyapatite beads (SHA), an in vitro tooth model. A Fap1-dependent increase in adherence is seen as the pH is reduced from pH 8 to pH 5. The polypeptide is Fap1 adhesin (fap1) (Streptococcus parasanguinis).